The chain runs to 360 residues: Phenylalanine--tRNA ligase alpha subunit (360 aa).

Residue Glu260 coordinates Mg(2+).

It belongs to the class-II aminoacyl-tRNA synthetase family. Phe-tRNA synthetase alpha subunit type 1 subfamily. As to quaternary structure, tetramer of two alpha and two beta subunits. Mg(2+) serves as cofactor.

It localises to the cytoplasm. It carries out the reaction tRNA(Phe) + L-phenylalanine + ATP = L-phenylalanyl-tRNA(Phe) + AMP + diphosphate + H(+). This Cereibacter sphaeroides (strain ATCC 17029 / ATH 2.4.9) (Rhodobacter sphaeroides) protein is Phenylalanine--tRNA ligase alpha subunit.